The following is a 298-amino-acid chain: Homoserine kinase (298 aa).

79–89 (PIARGLGSSGA) provides a ligand contact to ATP.

The protein belongs to the GHMP kinase family. Homoserine kinase subfamily.

Its subcellular location is the cytoplasm. The catalysed reaction is L-homoserine + ATP = O-phospho-L-homoserine + ADP + H(+). It functions in the pathway amino-acid biosynthesis; L-threonine biosynthesis; L-threonine from L-aspartate: step 4/5. Catalyzes the ATP-dependent phosphorylation of L-homoserine to L-homoserine phosphate. This is Homoserine kinase from Pyrobaculum islandicum (strain DSM 4184 / JCM 9189 / GEO3).